Reading from the N-terminus, the 293-residue chain is 33 kDa chaperonin (293 aa).

Intrachain disulfides connect cysteine 235–cysteine 237 and cysteine 267–cysteine 270.

Belongs to the HSP33 family. In terms of processing, under oxidizing conditions two disulfide bonds are formed involving the reactive cysteines. Under reducing conditions zinc is bound to the reactive cysteines and the protein is inactive.

The protein resides in the cytoplasm. Redox regulated molecular chaperone. Protects both thermally unfolding and oxidatively damaged proteins from irreversible aggregation. Plays an important role in the bacterial defense system toward oxidative stress. This is 33 kDa chaperonin from Deinococcus radiodurans (strain ATCC 13939 / DSM 20539 / JCM 16871 / CCUG 27074 / LMG 4051 / NBRC 15346 / NCIMB 9279 / VKM B-1422 / R1).